Here is a 2492-residue protein sequence, read N- to C-terminus: Talin-A (2492 aa).

Residues 84–365 (RPQKFKLLDG…GYIEIIMKAR (282 aa)) form the FERM domain. The 243-residue stretch at 2250–2492 (EEDNVLEDLE…NSRKQNYNKN (243 aa)) folds into the I/LWEQ domain.

It localises to the cytoplasm. Its subcellular location is the cytoskeleton. It is found in the cell cortex. Its function is as follows. Actin-binding protein that may be involved in the control of cell motility and chemotaxis. In Dictyostelium discoideum (Social amoeba), this protein is Talin-A (talA).